The chain runs to 365 residues: Probable L-tyrosine/L-aspartate decarboxylase (365 aa).

N6-(pyridoxal phosphate)lysine is present on Lys-224.

Belongs to the group II decarboxylase family. MfnA subfamily. Requires pyridoxal 5'-phosphate as cofactor.

The enzyme catalyses L-tyrosine + H(+) = tyramine + CO2. The catalysed reaction is L-aspartate + H(+) = beta-alanine + CO2. The protein operates within cofactor biosynthesis; methanofuran biosynthesis. It functions in the pathway cofactor biosynthesis; coenzyme A biosynthesis. Its function is as follows. Catalyzes the decarboxylation of L-tyrosine to produce tyramine for methanofuran biosynthesis. Can also catalyze the decarboxylation of L-aspartate to produce beta-alanine for coenzyme A (CoA) biosynthesis. In Methanoregula boonei (strain DSM 21154 / JCM 14090 / 6A8), this protein is Probable L-tyrosine/L-aspartate decarboxylase.